The sequence spans 189 residues: Cell division protein SepF (189 aa).

A disordered region spans residues 25–70 (ESRVQQQAVKPSNSRPAQQEPVRDIKQPRLVSSSSQHVTNTPSSNE). 2 stretches are compositionally biased toward polar residues: residues 27–41 (RVQQ…SRPA) and 54–70 (LVSS…SSNE).

The protein belongs to the SepF family. In terms of assembly, homodimer. Interacts with FtsZ.

It is found in the cytoplasm. Its function is as follows. Cell division protein that is part of the divisome complex and is recruited early to the Z-ring. Probably stimulates Z-ring formation, perhaps through the cross-linking of FtsZ protofilaments. Its function overlaps with FtsA. This is Cell division protein SepF from Streptococcus gordonii (strain Challis / ATCC 35105 / BCRC 15272 / CH1 / DL1 / V288).